A 760-amino-acid chain; its full sequence is RxLR effector protein PSR2 (760 aa).

Residues 1 to 21 form the signal peptide; the sequence is MGCRYAVLALAVAYFAGSIAA. A RxLR-dEER motif is present at residues 47 to 62; the sequence is RFLRAANTADERNEDR. One copy of the WY1 repeat lies at 87-134; that stretch reads PLLSWFEKKKSPDYVFLKLKINKGKQQLFDHPDWNVWVQYTTSVVKSD. The segment at 87–760 is 7 X 93 AA tandem repeats; sequence PLLSWFEKKK…TTKYMERYGQ (674 aa). An LWY2 repeat occupies 135-221; it reads PEEAMIAALR…MKLYNSKPVN (87 aa). One copy of the LWY3 repeat lies at 222 to 312; it reads KKQQVTLVSM…KYVDNYNRDF (91 aa). The stretch at 313 to 403 is one LWY4 repeat; that stretch reads PDEATTVMAT…KYVEDLNLKP (91 aa). The stretch at 404 to 496 is one LWY5 repeat; the sequence is EHNDLQVSII…KFLEHYYKSF (93 aa). Residues 497–584 form an LWY6 repeat; it reads PTPMMSALAK…RYLDEFNKKF (88 aa). Residues 585–760 form an LWY7 repeat; sequence PDEKVSMTDT…TTKYMERYGQ (176 aa).

This sequence belongs to the RxLR effector family. Interacts with host dsRNA-binding protein DRB4.

Its subcellular location is the secreted. It localises to the host cell. Secreted effector that possesses RNA silencing suppression activity by inhibiting the biogenesis of small RNAs in the host plant to promote enhanced susceptibility of host to the pathogen during infection. Interferes with secondary siRNA production by associating with host dsRNA-binding protein DRB4. Inhibits the host salicylic acid pathway during infection. This chain is RxLR effector protein PSR2, found in Phytophthora infestans (strain T30-4) (Potato late blight agent).